The following is a 194-amino-acid chain: MGVTPVSNQPLVAQQPKGIIDPSTGKPIGSNDAFFGEINNELADKGFLVTSTDELINWARTGSLMWMTFGLACCAVEMMQLSMPRYDVERFGFAPRASPRQSDVMIVAGTLTNKMAPALRKVYDQMPEPRYVISMGSCANGGGYYHYSYSVVRGCDRVVPIDIYVPGCPPTAEALLYGVLLLQKKIRRTGTIER.

Positions 1-12 (MGVTPVSNQPLV) are enriched in polar residues. Positions 1–23 (MGVTPVSNQPLVAQQPKGIIDPS) are disordered. [4Fe-4S] cluster is bound by residues Cys-73, Cys-74, Cys-138, and Cys-168.

This sequence belongs to the complex I 20 kDa subunit family. In terms of assembly, NDH-1 is composed of 14 different subunits. Subunits NuoB, C, D, E, F, and G constitute the peripheral sector of the complex. The cofactor is [4Fe-4S] cluster.

It localises to the cell inner membrane. The enzyme catalyses a quinone + NADH + 5 H(+)(in) = a quinol + NAD(+) + 4 H(+)(out). Its function is as follows. NDH-1 shuttles electrons from NADH, via FMN and iron-sulfur (Fe-S) centers, to quinones in the respiratory chain. The immediate electron acceptor for the enzyme in this species is believed to be ubiquinone. Couples the redox reaction to proton translocation (for every two electrons transferred, four hydrogen ions are translocated across the cytoplasmic membrane), and thus conserves the redox energy in a proton gradient. The sequence is that of NADH-quinone oxidoreductase subunit B 1 from Rhizobium etli (strain ATCC 51251 / DSM 11541 / JCM 21823 / NBRC 15573 / CFN 42).